The following is a 235-amino-acid chain: Glycerol-3-phosphate acyltransferase (235 aa).

The next 6 membrane-spanning stretches (helical) occupy residues 4 to 24 (LIAI…IMAG), 56 to 76 (AVTL…VAFF), 94 to 114 (LLAG…GFKG), 122 to 142 (AGML…IFLL), 152 to 172 (VASI…KYIF), and 191 to 211 (FHDS…LAIL).

It belongs to the PlsY family. Probably interacts with PlsX.

Its subcellular location is the cell inner membrane. It carries out the reaction an acyl phosphate + sn-glycerol 3-phosphate = a 1-acyl-sn-glycero-3-phosphate + phosphate. Its pathway is lipid metabolism; phospholipid metabolism. Catalyzes the transfer of an acyl group from acyl-phosphate (acyl-PO(4)) to glycerol-3-phosphate (G3P) to form lysophosphatidic acid (LPA). This enzyme utilizes acyl-phosphate as fatty acyl donor, but not acyl-CoA or acyl-ACP. The sequence is that of Glycerol-3-phosphate acyltransferase from Chlorobium phaeobacteroides (strain DSM 266 / SMG 266 / 2430).